The chain runs to 369 residues: Ferredoxin--NADP reductase 2 (369 aa).

Positions 1 to 21 are disordered; sequence MDLSIPNPVADATRQVEGGSP. Residues Asp-58, Gln-66, Tyr-71, Val-111, Phe-146, Asp-311, and Thr-352 each contribute to the FAD site.

Belongs to the ferredoxin--NADP reductase type 2 family. Homodimer. The cofactor is FAD.

The catalysed reaction is 2 reduced [2Fe-2S]-[ferredoxin] + NADP(+) + H(+) = 2 oxidized [2Fe-2S]-[ferredoxin] + NADPH. This Cupriavidus taiwanensis (strain DSM 17343 / BCRC 17206 / CCUG 44338 / CIP 107171 / LMG 19424 / R1) (Ralstonia taiwanensis (strain LMG 19424)) protein is Ferredoxin--NADP reductase 2.